The chain runs to 167 residues: Cofilin-2 (167 aa).

The ADF-H domain maps to 4–153; the sequence is GVTVNDEVIK…KDRCTLADKL (150 aa). A Nuclear localization signal motif is present at residues 30–34; that stretch reads KKRKK.

The protein belongs to the actin-binding proteins ADF family.

It localises to the nucleus matrix. Its subcellular location is the cytoplasm. The protein resides in the cytoskeleton. Functionally, controls reversibly actin polymerization and depolymerization in a pH-sensitive manner. It has the ability to bind G- and F-actin in a 1:1 ratio of cofilin to actin. It is the major component of intranuclear and cytoplasmic actin rods. This is Cofilin-2 (cfl2) from Xenopus tropicalis (Western clawed frog).